Reading from the N-terminus, the 366-residue chain is MADNSSDYRALFLNDVPMMDARAPVEFSKGAFPGVINLPLMNDIERQKVGTCYKQHGQDAAIQLGHQLVCGQVKDERVNAWIEFAKANPDGYLYCFRGGLRSQTVQRWLKDAGVDYPRVLGGYKAMRTFLLDTLHEAVSECSIVVLGGMTGTGKTEVLTQLRNSVDLEGIANHRGSSFGKRATGQPAQIDFENRLAIDLLKKRAAGIEQFVVEDESRLVGSCNVPLELHQAMQGCPMVWLEDSFENRVERILEDYVINLCAEFITVKGEEQGFGLFAERLLQSLNNIHKRLGGERHQRLSDLMQAALEEQQRSGAVDLHRGWIEGLLGEYYDPMYAYQREHKAARIEFAGDQTQVLAYLRERSEQR.

Residues 12 to 135 enclose the Rhodanese domain; the sequence is FLNDVPMMDA…MRTFLLDTLH (124 aa). The active-site S-selanylcysteine intermediate is the Cys-95.

Belongs to the SelU family. Monomer.

The enzyme catalyses 5-methylaminomethyl-2-thiouridine(34) in tRNA + selenophosphate + (2E)-geranyl diphosphate + H2O + H(+) = 5-methylaminomethyl-2-selenouridine(34) in tRNA + (2E)-thiogeraniol + phosphate + diphosphate. It carries out the reaction 5-methylaminomethyl-2-thiouridine(34) in tRNA + (2E)-geranyl diphosphate = 5-methylaminomethyl-S-(2E)-geranyl-thiouridine(34) in tRNA + diphosphate. It catalyses the reaction 5-methylaminomethyl-S-(2E)-geranyl-thiouridine(34) in tRNA + selenophosphate + H(+) = 5-methylaminomethyl-2-(Se-phospho)selenouridine(34) in tRNA + (2E)-thiogeraniol. The catalysed reaction is 5-methylaminomethyl-2-(Se-phospho)selenouridine(34) in tRNA + H2O = 5-methylaminomethyl-2-selenouridine(34) in tRNA + phosphate. Functionally, involved in the post-transcriptional modification of the uridine at the wobble position (U34) of tRNA(Lys), tRNA(Glu) and tRNA(Gln). Catalyzes the conversion of 2-thiouridine (S2U-RNA) to 2-selenouridine (Se2U-RNA). Acts in a two-step process involving geranylation of 2-thiouridine (S2U) to S-geranyl-2-thiouridine (geS2U) and subsequent selenation of the latter derivative to 2-selenouridine (Se2U) in the tRNA chain. The sequence is that of tRNA 2-selenouridine synthase from Pseudomonas syringae pv. syringae (strain B728a).